Reading from the N-terminus, the 379-residue chain is Anhydro-N-acetylmuramic acid kinase (379 aa).

9–16 is a binding site for ATP; it reads GTSADGVD.

Belongs to the anhydro-N-acetylmuramic acid kinase family.

The catalysed reaction is 1,6-anhydro-N-acetyl-beta-muramate + ATP + H2O = N-acetyl-D-muramate 6-phosphate + ADP + H(+). Its pathway is amino-sugar metabolism; 1,6-anhydro-N-acetylmuramate degradation. It functions in the pathway cell wall biogenesis; peptidoglycan recycling. Catalyzes the specific phosphorylation of 1,6-anhydro-N-acetylmuramic acid (anhMurNAc) with the simultaneous cleavage of the 1,6-anhydro ring, generating MurNAc-6-P. Is required for the utilization of anhMurNAc either imported from the medium or derived from its own cell wall murein, and thus plays a role in cell wall recycling. This chain is Anhydro-N-acetylmuramic acid kinase, found in Parasynechococcus marenigrum (strain WH8102).